The chain runs to 247 residues: Large ribosomal subunit protein uL30z (247 aa).

This sequence belongs to the universal ribosomal protein uL30 family.

The sequence is that of Large ribosomal subunit protein uL30z (RPL7A) from Arabidopsis thaliana (Mouse-ear cress).